The chain runs to 1009 residues: Probable beta-galactosidase B (1009 aa).

The first 21 residues, 1–21 (MAQLFTKIIVYFLLFASPLLA), serve as a signal peptide directing secretion. An N-linked (GlcNAc...) asparagine glycan is attached at asparagine 28. Tyrosine 85 contacts substrate. Asparagine 95 carries an N-linked (GlcNAc...) asparagine glycan. Substrate-binding residues include asparagine 130, alanine 131, glutamate 132, and asparagine 190. Glutamate 191 acts as the Proton donor in catalysis. Residue asparagine 247 is glycosylated (N-linked (GlcNAc...) asparagine). Tyrosine 260 is a substrate binding site. Cysteine 266 and cysteine 319 form a disulfide bridge. The active-site Nucleophile is glutamate 303. Tyrosine 368 lines the substrate pocket. Residues asparagine 375, asparagine 406, asparagine 427, asparagine 451, asparagine 682, asparagine 740, asparagine 771, asparagine 784, asparagine 826, and asparagine 883 are each glycosylated (N-linked (GlcNAc...) asparagine).

It belongs to the glycosyl hydrolase 35 family.

The protein localises to the secreted. The catalysed reaction is Hydrolysis of terminal non-reducing beta-D-galactose residues in beta-D-galactosides.. Cleaves beta-linked terminal galactosyl residues from gangliosides, glycoproteins, and glycosaminoglycans. The sequence is that of Probable beta-galactosidase B (lacB) from Talaromyces marneffei (strain ATCC 18224 / CBS 334.59 / QM 7333) (Penicillium marneffei).